A 158-amino-acid polypeptide reads, in one-letter code: Cyclic pyranopterin monophosphate synthase (158 aa).

Substrate-binding positions include 75–77 (LCH) and 113–114 (ME). The active site involves Asp-128.

This sequence belongs to the MoaC family. In terms of assembly, homohexamer; trimer of dimers.

The enzyme catalyses (8S)-3',8-cyclo-7,8-dihydroguanosine 5'-triphosphate = cyclic pyranopterin phosphate + diphosphate. Its pathway is cofactor biosynthesis; molybdopterin biosynthesis. In terms of biological role, catalyzes the conversion of (8S)-3',8-cyclo-7,8-dihydroguanosine 5'-triphosphate to cyclic pyranopterin monophosphate (cPMP). This chain is Cyclic pyranopterin monophosphate synthase, found in Roseiflexus castenholzii (strain DSM 13941 / HLO8).